Reading from the N-terminus, the 140-residue chain is Lipoprotein MlpG (140 aa).

The first 17 residues, 1 to 17 (MKIINILFCLFLLMLNG), serve as a signal peptide directing secretion. The N-palmitoyl cysteine moiety is linked to residue Cys-18. Cys-18 is lipidated: S-diacylglycerol cysteine. A disordered region spans residues 22–57 (DTNTKQTKSRQKRDLTQKEATQEKPKSKSKEDLLRE). The span at 33–57 (KRDLTQKEATQEKPKSKSKEDLLRE) shows a compositional bias: basic and acidic residues.

The protein belongs to the Multicopy lipoprotein (Mlp) family.

It localises to the cell outer membrane. Its function is as follows. An outer membrane protein that may participate in pathogenesis. Some human Lyme disease patients have antibodies against this protein. The Mlp proteins probably undergo intragenic recombination, generating new alleles. This Borreliella burgdorferi (strain ATCC 35210 / DSM 4680 / CIP 102532 / B31) (Borrelia burgdorferi) protein is Lipoprotein MlpG.